A 163-amino-acid chain; its full sequence is MVTFLGNPVSFTGKQLQVGDKALDFSLTTTDLSKKSLADFDGKKKVLSVVPSIDTGICSTQTRRFNEELAGLDNTVVLTVSMDLPFAQKRWCGAEGLDNAIMLSDYFDHSFGRDYALLINEWHLLARAVFVLDTDNTIRYVEYVDNINSEPNFEAAIAAAKAL.

A Thioredoxin domain is found at 16–162; the sequence is LQVGDKALDF…FEAAIAAAKA (147 aa). The active-site Cysteine sulfenic acid (-SOH) intermediate is Cys-58. Cys-58 and Cys-92 are oxidised to a cystine.

This sequence belongs to the peroxiredoxin family. Tpx subfamily. As to quaternary structure, homodimer.

It catalyses the reaction a hydroperoxide + [thioredoxin]-dithiol = an alcohol + [thioredoxin]-disulfide + H2O. In terms of biological role, thiol-specific peroxidase that catalyzes the reduction of hydrogen peroxide and organic hydroperoxides to water and alcohols, respectively. Plays a role in cell protection against oxidative stress by detoxifying peroxides. The chain is Thiol peroxidase from Streptococcus pneumoniae serotype 2 (strain D39 / NCTC 7466).